Reading from the N-terminus, the 372-residue chain is Chloromuconate cycloisomerase (372 aa).

Lys-158 acts as the Proton acceptor in catalysis. Mn(2+) contacts are provided by Asp-187, Glu-213, and Asp-238. Glu-316 acts as the Proton donor in catalysis.

Belongs to the mandelate racemase/muconate lactonizing enzyme family. Mn(2+) serves as cofactor.

It catalyses the reaction 2-[(2R)-2-chloro-2,5-dihydro-5-oxofuryl]acetate = 3-chloro-cis,cis-muconate + H(+). Its pathway is aromatic compound metabolism; 3-chlorocatechol degradation. The polypeptide is Chloromuconate cycloisomerase (tfdDII) (Cupriavidus pinatubonensis (strain JMP 134 / LMG 1197) (Cupriavidus necator (strain JMP 134))).